The following is a 138-amino-acid chain: Acidic phospholipase A2 1 (138 aa).

Residues M1 to G16 form the signal peptide. 7 cysteine pairs are disulfide-bonded: C42–C131, C44–C60, C59–C110, C65–C138, C66–C103, C73–C97, and C91–C101. Y43, G45, and G47 together coordinate Ca(2+). H63 is an active-site residue. Ca(2+) is bound at residue D64. The active site involves D104.

It belongs to the phospholipase A2 family. Group II subfamily. D49 sub-subfamily. Homodimer. Ca(2+) serves as cofactor. As to expression, expressed by the venom gland.

It is found in the secreted. It carries out the reaction a 1,2-diacyl-sn-glycero-3-phosphocholine + H2O = a 1-acyl-sn-glycero-3-phosphocholine + a fatty acid + H(+). Functionally, snake venom phospholipase A2 (PLA2) that is highly lipolytic and myolytic. PLA2 catalyzes the calcium-dependent hydrolysis of the 2-acyl groups in 3-sn-phosphoglycerides. This is Acidic phospholipase A2 1 from Protobothrops flavoviridis (Habu).